We begin with the raw amino-acid sequence, 239 residues long: MNIHLDKHGQGMPLVLFHGWGFDNQIWQPIIPYLKPKYQIILVDLPGFGLTPMMDWESFKKNLLDQLPDKFALAGWSMGGLYATRLAIEEPARVQYLINITSSPRFISDIDWPGVAEEVFVNFYNNLSKDINKTLKEFISLQLNKMKFDFKIGNPPSPEGLAFGLEILGTWDFREQLKQITIPTVYLFGRLDPITPVKTMAIMEKNYPNFKYVLFNRAAHMPFLSHTDLFITMMDEFIK.

Residues W20, 77 to 78 (SM), and 138 to 142 (FISLQ) each bind substrate. S77 (nucleophile) is an active-site residue. Residues D192 and H220 contribute to the active site. H220 contributes to the substrate binding site.

The protein belongs to the AB hydrolase superfamily. Carboxylesterase BioH family. In terms of assembly, monomer.

It localises to the cytoplasm. The enzyme catalyses 6-carboxyhexanoyl-[ACP] methyl ester + H2O = 6-carboxyhexanoyl-[ACP] + methanol + H(+). Its pathway is cofactor biosynthesis; biotin biosynthesis. The physiological role of BioH is to remove the methyl group introduced by BioC when the pimeloyl moiety is complete. It allows to synthesize pimeloyl-ACP via the fatty acid synthetic pathway through the hydrolysis of the ester bonds of pimeloyl-ACP esters. The protein is Pimeloyl-[acyl-carrier protein] methyl ester esterase of Legionella pneumophila (strain Paris).